We begin with the raw amino-acid sequence, 1030 residues long: Arrestin domain-containing protein F (1030 aa).

Disordered stretches follow at residues 1–27 and 119–154; these read MEIIKENNENDGENINNIPKKKSGSKR and ENKNISDNSNFDDGEEDDTDNKKNINNKNNNNNNPL. Acidic residues predominate over residues 128-137; it reads NFDDGEEDDT. Over residues 142–152 the composition is skewed to low complexity; it reads NINNKNNNNNN. Coiled-coil stretches lie at residues 320-374 and 544-577; these read HQLE…HNNN and QKLNKKDKEKEKEKEKENDNDNENNNSESLIRDQ. 2 disordered regions span residues 539–572 and 885–931; these read SPQSPQKLNKKDKEKEKEKEKENDNDNENNNSES and NNEK…NNNN. The span at 547 to 562 shows a compositional bias: basic and acidic residues; that stretch reads NKKDKEKEKEKEKEND. The segment covering 910 to 931 has biased composition (low complexity); it reads SPSSSSFLSNSSNTSSSKNNNN.

It belongs to the arrestin family.

The sequence is that of Arrestin domain-containing protein F (adcF) from Dictyostelium discoideum (Social amoeba).